Consider the following 461-residue polypeptide: ATP synthase subunit beta 2 (461 aa).

An ATP-binding site is contributed by 151–158; the sequence is GGAGVGKT.

Belongs to the ATPase alpha/beta chains family. As to quaternary structure, F-type ATPases have 2 components, CF(1) - the catalytic core - and CF(0) - the membrane proton channel. CF(1) has five subunits: alpha(3), beta(3), gamma(1), delta(1), epsilon(1). CF(0) has three main subunits: a(1), b(2) and c(9-12). The alpha and beta chains form an alternating ring which encloses part of the gamma chain. CF(1) is attached to CF(0) by a central stalk formed by the gamma and epsilon chains, while a peripheral stalk is formed by the delta and b chains.

It localises to the cell inner membrane. The enzyme catalyses ATP + H2O + 4 H(+)(in) = ADP + phosphate + 5 H(+)(out). In terms of biological role, produces ATP from ADP in the presence of a proton gradient across the membrane. The catalytic sites are hosted primarily by the beta subunits. The polypeptide is ATP synthase subunit beta 2 (Photobacterium profundum (strain SS9)).